We begin with the raw amino-acid sequence, 281 residues long: MVVVGKIHEMKDIVKKLKKEGKTIGFVPTMGYLHEGHLSLVRKSKSQNDITIMSIFVNPIQFGPNEDYDRYPRDFERDKNLAEKEGVDYVFYPSVKEMYPDDFKTVVSVKKITDIMCGKSRPGHFDGVATVVLKLFNIVNPDRAYFGQKDAQQLAVIKQMVKDLNLDVEIVPCPIVREEDGLAMSSRNTYLSGDERKSATVLYRALNLAKDLIEKGERNVSKLKKAMEDLILKEKYTKIDYIEFVNYDTFEPISKVEGKVLIALAVFVGTTRLIDNIVVEV.

Residue 30–37 participates in ATP binding; that stretch reads MGYLHEGH. His37 serves as the catalytic Proton donor. A (R)-pantoate-binding site is contributed by Gln61. A beta-alanine-binding site is contributed by Gln61. An ATP-binding site is contributed by 147–150; the sequence is GQKD. Residue Gln153 coordinates (R)-pantoate. Residues Val176 and 184–187 each bind ATP; that span reads MSSR.

It belongs to the pantothenate synthetase family. Homodimer.

It localises to the cytoplasm. The enzyme catalyses (R)-pantoate + beta-alanine + ATP = (R)-pantothenate + AMP + diphosphate + H(+). The protein operates within cofactor biosynthesis; (R)-pantothenate biosynthesis; (R)-pantothenate from (R)-pantoate and beta-alanine: step 1/1. Catalyzes the condensation of pantoate with beta-alanine in an ATP-dependent reaction via a pantoyl-adenylate intermediate. This Caldicellulosiruptor saccharolyticus (strain ATCC 43494 / DSM 8903 / Tp8T 6331) protein is Pantothenate synthetase.